Here is a 675-residue protein sequence, read N- to C-terminus: Methionine--tRNA ligase (675 aa).

A 'HIGH' region motif is present at residues 15 to 25; it reads PYANGSIHLGH. Zn(2+)-binding residues include cysteine 146, cysteine 149, cysteine 159, and cysteine 162. The 'KMSKS' region motif lies at 332–336; the sequence is KMSKS. Lysine 335 provides a ligand contact to ATP. Residues 573–675 form the tRNA-binding domain; that stretch reads DFAKVDMRIA…SGAQPGMQVK (103 aa).

Belongs to the class-I aminoacyl-tRNA synthetase family. MetG type 1 subfamily. Homodimer. Requires Zn(2+) as cofactor.

The protein localises to the cytoplasm. It catalyses the reaction tRNA(Met) + L-methionine + ATP = L-methionyl-tRNA(Met) + AMP + diphosphate. Functionally, is required not only for elongation of protein synthesis but also for the initiation of all mRNA translation through initiator tRNA(fMet) aminoacylation. In Yersinia pestis bv. Antiqua (strain Angola), this protein is Methionine--tRNA ligase.